A 747-amino-acid chain; its full sequence is 3',5'-cyclic-AMP phosphodiesterase 4D (747 aa).

Positions 1–28 are disordered; it reads MERDTCDVLSRSKSASEETLHSCNEEED. Residues 14–24 are compositionally biased toward basic and acidic residues; that stretch reads SASEETLHSCN. S238, S240, S287, and S314 each carry phosphoserine. A disordered region spans residues 282-302; it reads EVEIPSPTQKEKEKKKRPMSQ. The 330-residue stretch at 325–654 folds into the PDEase domain; that stretch reads VKTEQEDVLA…EWYQSTIPQS (330 aa). A Glycyl lysine isopeptide (Lys-Gly) (interchain with G-Cter in SUMO) cross-link involves residue K326. H401 functions as the Proton donor in the catalytic mechanism. H401 is a binding site for 3',5'-cyclic AMP. H401 is a binding site for AMP. Zn(2+) contacts are provided by H405, H441, D442, and D559. Residues D442, D559, N562, Q610, and F613 each contribute to the AMP site. Mg(2+) is bound at residue D442. D442 provides a ligand contact to Mn(2+). The 3',5'-cyclic AMP site is built by Q610 and F613. A disordered region spans residues 649–747; sequence STIPQSPSPA…CVPDDCCPDT (99 aa). The span at 701 to 712 shows a compositional bias: polar residues; sequence CSDSKTLCTQDS. Residues 718–734 are compositionally biased toward acidic residues; that stretch reads PLDEQVEEEAVAEEESQ.

It belongs to the cyclic nucleotide phosphodiesterase family. PDE4 subfamily. As to quaternary structure, homodimer for the long isoforms. Isoforms with truncated N-termini are monomeric. Binds ARRB2. Interacts with PDE4DIP. Identified in a complex composed of RYR1, PDE4D, PKA, FKBP1A and protein phosphatase 1 (PP1). Interacts (via N-terminal region) with SHANK2 (via proline-rich region); the interaction is increased in a PKA-dependent manner. Requires Zn(2+) as cofactor. Mg(2+) serves as cofactor. The cofactor is Mn(2+). Post-translationally, sumoylation of long isoforms by PIAS4 augments their activation by PKA phosphorylation and represses their inhibition by ERK phosphorylation. Expressed in brain (at protein level). Isoform 7 is detected in heart, brain, lung, kidney and testis.

Its subcellular location is the cytoplasm. It is found in the membrane. It localises to the cytoskeleton. The protein resides in the microtubule organizing center. The protein localises to the centrosome. Its subcellular location is the apical cell membrane. It catalyses the reaction 3',5'-cyclic AMP + H2O = AMP + H(+). The protein operates within purine metabolism; 3',5'-cyclic AMP degradation; AMP from 3',5'-cyclic AMP: step 1/1. With respect to regulation, inhibited by rolipram. Activated by phosphatidic acid. Hydrolyzes the second messenger cAMP, which is a key regulator of many important physiological processes. This is 3',5'-cyclic-AMP phosphodiesterase 4D (Pde4d) from Mus musculus (Mouse).